Reading from the N-terminus, the 84-residue chain is Cell division topological specificity factor (84 aa).

The protein belongs to the MinE family.

Prevents the cell division inhibition by proteins MinC and MinD at internal division sites while permitting inhibition at polar sites. This ensures cell division at the proper site by restricting the formation of a division septum at the midpoint of the long axis of the cell. The polypeptide is Cell division topological specificity factor (Burkholderia ambifaria (strain MC40-6)).